The following is a 224-amino-acid chain: LexA repressor (224 aa).

The segment at residues 29 to 49 (RAEIARALGFRSPNAAEDHLK) is a DNA-binding region (H-T-H motif). Catalysis depends on for autocatalytic cleavage activity residues serine 142 and lysine 179.

This sequence belongs to the peptidase S24 family. Homodimer.

The enzyme catalyses Hydrolysis of Ala-|-Gly bond in repressor LexA.. Represses a number of genes involved in the response to DNA damage (SOS response), including recA and lexA. In the presence of single-stranded DNA, RecA interacts with LexA causing an autocatalytic cleavage which disrupts the DNA-binding part of LexA, leading to derepression of the SOS regulon and eventually DNA repair. In Bordetella petrii (strain ATCC BAA-461 / DSM 12804 / CCUG 43448), this protein is LexA repressor.